We begin with the raw amino-acid sequence, 118 residues long: Large ribosomal subunit protein bL20 (118 aa).

It belongs to the bacterial ribosomal protein bL20 family.

In terms of biological role, binds directly to 23S ribosomal RNA and is necessary for the in vitro assembly process of the 50S ribosomal subunit. It is not involved in the protein synthesizing functions of that subunit. This Pseudomonas syringae pv. syringae (strain B728a) protein is Large ribosomal subunit protein bL20.